The primary structure comprises 635 residues: DNA-directed RNA polymerase III subunit rpc3 (635 aa).

Disordered regions lie at residues 131–164 (PEQS…SDQQ), 246–295 (VPRG…GYDT), and 386–424 (SGSI…LSSG). Acidic residues predominate over residues 272–292 (SVDEDDEQDEEENEWSDDEMG). Basic and acidic residues predominate over residues 398 to 407 (DNRRGKRPLE). Over residues 411-424 (NGTNHEGANGLSSG) the composition is skewed to polar residues. Residues 562-583 (TYKAMSRCFQRLRFERNRLKEF) form a leucine-zipper region.

This sequence belongs to the RNA polymerase beta chain family. As to quaternary structure, component of the RNA polymerase III (Pol III) complex consisting of 17 subunits.

It is found in the nucleus. In terms of biological role, DNA-dependent RNA polymerase catalyzes the transcription of DNA into RNA using the four ribonucleoside triphosphates as substrates. Specific core component of RNA polymerase III which synthesizes small RNAs, such as 5S rRNA and tRNAs. The protein is DNA-directed RNA polymerase III subunit rpc3 (rpc82) of Aspergillus clavatus (strain ATCC 1007 / CBS 513.65 / DSM 816 / NCTC 3887 / NRRL 1 / QM 1276 / 107).